A 568-amino-acid chain; its full sequence is Urease subunit alpha (568 aa).

Positions 131–568 (GGMDAHIHFI…LPLAQRYFLY (438 aa)) constitute a Urease domain. Positions 136, 138, and 219 each coordinate Ni(2+). K219 bears the N6-carboxylysine mark. Position 221 (H221) interacts with substrate. Residues H248 and H274 each contribute to the Ni(2+) site. The Proton donor role is filled by H322. Position 362 (D362) interacts with Ni(2+).

The protein belongs to the metallo-dependent hydrolases superfamily. Urease alpha subunit family. In terms of assembly, heterotrimer of UreA (gamma), UreB (beta) and UreC (alpha) subunits. Three heterotrimers associate to form the active enzyme. Ni cation is required as a cofactor. Carboxylation allows a single lysine to coordinate two nickel ions.

It localises to the cytoplasm. The catalysed reaction is urea + 2 H2O + H(+) = hydrogencarbonate + 2 NH4(+). The protein operates within nitrogen metabolism; urea degradation; CO(2) and NH(3) from urea (urease route): step 1/1. The sequence is that of Urease subunit alpha from Cereibacter sphaeroides (strain ATCC 17023 / DSM 158 / JCM 6121 / CCUG 31486 / LMG 2827 / NBRC 12203 / NCIMB 8253 / ATH 2.4.1.) (Rhodobacter sphaeroides).